The primary structure comprises 374 residues: Deoxyguanosinetriphosphate triphosphohydrolase-like protein (374 aa).

Residues 65 to 196 (RLTHSLEVAQ…ANLADEIAYN (132 aa)) enclose the HD domain.

Belongs to the dGTPase family. Type 2 subfamily.

The chain is Deoxyguanosinetriphosphate triphosphohydrolase-like protein (dgt) from Nitrosomonas europaea (strain ATCC 19718 / CIP 103999 / KCTC 2705 / NBRC 14298).